Consider the following 297-residue polypeptide: Iron-sulfur cluster assembly SufBD family protein ycf24 (297 aa).

The protein belongs to the iron-sulfur cluster assembly SufBD family.

The protein localises to the plastid. It localises to the chloroplast. This chain is Iron-sulfur cluster assembly SufBD family protein ycf24 (ycf24), found in Antithamnion sp. (Red alga).